We begin with the raw amino-acid sequence, 226 residues long: Enolase-phosphatase E1 (226 aa).

It belongs to the HAD-like hydrolase superfamily. MasA/MtnC family. Monomer. Mg(2+) serves as cofactor.

It carries out the reaction 5-methylsulfanyl-2,3-dioxopentyl phosphate + H2O = 1,2-dihydroxy-5-(methylsulfanyl)pent-1-en-3-one + phosphate. It participates in amino-acid biosynthesis; L-methionine biosynthesis via salvage pathway; L-methionine from S-methyl-5-thio-alpha-D-ribose 1-phosphate: step 3/6. Its pathway is amino-acid biosynthesis; L-methionine biosynthesis via salvage pathway; L-methionine from S-methyl-5-thio-alpha-D-ribose 1-phosphate: step 4/6. In terms of biological role, bifunctional enzyme that catalyzes the enolization of 2,3-diketo-5-methylthiopentyl-1-phosphate (DK-MTP-1-P) into the intermediate 2-hydroxy-3-keto-5-methylthiopentenyl-1-phosphate (HK-MTPenyl-1-P), which is then dephosphorylated to form the acireductone 1,2-dihydroxy-3-keto-5-methylthiopentene (DHK-MTPene). In Shewanella baltica (strain OS223), this protein is Enolase-phosphatase E1.